Here is a 135-residue protein sequence, read N- to C-terminus: Histone H3 type 2 (135 aa).

The tract at residues 1 to 40 (MARTKQTARKSTGGKAPRKQLATKAARKTPATGGVKKPHR) is disordered. Lys5 bears the N6-methyllysine mark. The residue at position 10 (Lys10) is an N6-acetyllysine; alternate. Lys10 is modified (N6-methyllysine; alternate). Ser11 is modified (phosphoserine). Thr12 is subject to Phosphothreonine. Lys15, Lys19, and Lys24 each carry N6-acetyllysine. An N6-acetyllysine; alternate modification is found at Lys28. At Lys28 the chain carries N6-methyllysine; alternate. Lys36 and Lys37 each carry N6-methyllysine.

This sequence belongs to the histone H3 family. In terms of assembly, the nucleosome is a histone octamer containing two molecules each of H2A, H2B, H3 and H4 assembled in one H3-H4 heterotetramer and two H2A-H2B heterodimers. The octamer wraps approximately 147 bp of DNA. Acetylation is generally linked to gene activation. Acetylated to form H3K9ac (11%), H3K14ac (17%), H3K18ac (11%), H3K23ac (16%) and H3K27ac (7%). H3K4, H3K35 and H3K36 are not acetylated. H3K4me prevents acetylation. 32% of the histone H3 are acetylated with, on average, 2.4 acetyl-Lys. They are all continuously deacatylated and re-acetylated with a half-life of approximately 2 minutes. Post-translationally, monomethylated to form H3K4me1 (81%), H3K9me1 (16%), H3K27me1 (25%), H3K35me1 (25%) and H3K36me1 (5%). No methylation at H3K14, H3K18 and H3K23. Methylated by a protein complex that includes Mut11. Set1 methylates specifically H3K4. H3K4me1 is associated with silenced euchromatin. Set3 forms H3K9me1, while H3K9me2 is undetected. H3K9me1 is specifically associated with silent, multi-copy transgenes. In terms of processing, no phosphorylation detected.

The protein resides in the nucleus. It localises to the chromosome. Functionally, core component of nucleosome. Nucleosomes wrap and compact DNA into chromatin, limiting DNA accessibility to the cellular machineries which require DNA as a template. Histones thereby play a central role in transcription regulation, DNA repair, DNA replication and chromosomal stability. DNA accessibility is regulated via a complex set of post-translational modifications of histones, also called histone code, and nucleosome remodeling. The chain is Histone H3 type 2 (ch3-II) from Chlamydomonas reinhardtii (Chlamydomonas smithii).